Consider the following 856-residue polypeptide: Lon protease homolog 2, peroxisomal (856 aa).

A Lon N-terminal domain is found at 13 to 222; sequence LPLLLTHEGV…VTIPLLLRQI (210 aa). 379 to 386 contributes to the ATP binding site; the sequence is GPPGVGKT. The segment covering 586–608 has biased composition (basic and acidic residues); that stretch reads GQHREHKSEHLEAPEGEERKESV. Residues 586 to 614 form a disordered region; it reads GQHREHKSEHLEAPEGEERKESVPEGSKS. The region spanning 655–841 is the Lon proteolytic domain; that stretch reads LNQPGVAIGL…DEVLNAAFDG (187 aa). Residues S747 and K790 contribute to the active site. The short motif at 854-856 is the Microbody targeting signal element; the sequence is SKL.

It belongs to the peptidase S16 family.

The protein resides in the peroxisome matrix. The enzyme catalyses Hydrolysis of proteins in presence of ATP.. ATP-dependent serine protease that mediates the selective degradation of misfolded and unassembled polypeptides in the peroxisomal matrix. Necessary for type 2 peroxisome targeting signal (PTS2)-containing protein processing and facilitates peroxisome matrix protein import. The polypeptide is Lon protease homolog 2, peroxisomal (lonp2) (Xenopus laevis (African clawed frog)).